We begin with the raw amino-acid sequence, 138 residues long: Diuretic hormone 1 (138 aa).

An N-terminal signal peptide occupies residues 1 to 19 (MMWWAIWCVMVVVSSAASA). Positions 20–78 (APAPDSAPMDLVQIDSAGPDDESLGYAVSSLEGRYGAEAPWLYLLAEMPRDSQIGRAAV) are excised as a propeptide. Ile-121 is subject to Isoleucine amide. Residues 125 to 138 (GLQWSRSEQPSAYY) constitute a propeptide that is removed on maturation.

This sequence belongs to the sauvagine/corticotropin-releasing factor/urotensin I family.

The protein resides in the secreted. Its function is as follows. Regulation of fluid secretion. This chain is Diuretic hormone 1, found in Manduca sexta (Tobacco hawkmoth).